Here is a 140-residue protein sequence, read N- to C-terminus: Profilin-2 (140 aa).

The residue at position 2 (A2) is an N-acetylalanine.

The protein belongs to the profilin family. In terms of assembly, occurs in many kinds of cells as a complex with monomeric actin in a 1:1 ratio. Interacts with PFN2. As to quaternary structure, interacts with ACTMAP (via N-terminus); the interaction may facilitate efficient cleavage of the acetylated N-terminus of immature actin by ACTMAP. Highly expressed in brain, skeletal muscle and kidney and less strongly in heart, placenta, lung and liver.

The protein resides in the cytoplasm. The protein localises to the cytoskeleton. Functionally, binds to actin and affects the structure of the cytoskeleton. At high concentrations, profilin prevents the polymerization of actin, whereas it enhances it at low concentrations. By binding to PIP2, it inhibits the formation of IP3 and DG. The sequence is that of Profilin-2 (PFN2) from Homo sapiens (Human).